The chain runs to 188 residues: Tetratricopeptide repeat protein 36 (188 aa).

TPR repeat units follow at residues 50–83, 85–117, and 122–155; these read SKAL…LPER, SAYN…SGGR, and RQGF…GSPF.

It belongs to the TTC36 family.

In Bos taurus (Bovine), this protein is Tetratricopeptide repeat protein 36 (TTC36).